Reading from the N-terminus, the 430-residue chain is GTPase Obg (430 aa).

One can recognise an Obg domain in the interval 1 to 158; that stretch reads MFIDKAKIYL…LTVVLELKLI (158 aa). The region spanning 159–330 is the OBG-type G domain; that stretch reads ADVGLVGFPN…LLSYVSKRLK (172 aa). Residues 165–172, 190–194, 212–215, 282–285, and 311–313 contribute to the GTP site; these read GFPNVGKS, FTTLT, DIPG, NKTD, and SAA. Positions 172 and 192 each coordinate Mg(2+). The region spanning 351–430 is the OCT domain; that stretch reads KYEETEDKYH…MYSVEFEYFN (80 aa).

This sequence belongs to the TRAFAC class OBG-HflX-like GTPase superfamily. OBG GTPase family. Monomer. Mg(2+) serves as cofactor.

It is found in the cytoplasm. Its function is as follows. An essential GTPase which binds GTP, GDP and possibly (p)ppGpp with moderate affinity, with high nucleotide exchange rates and a fairly low GTP hydrolysis rate. Plays a role in control of the cell cycle, stress response, ribosome biogenesis and in those bacteria that undergo differentiation, in morphogenesis control. This is GTPase Obg from Alkaliphilus oremlandii (strain OhILAs) (Clostridium oremlandii (strain OhILAs)).